Here is a 197-residue protein sequence, read N- to C-terminus: uncharacterized protein (197 aa).

A compositionally biased stretch (polar residues) spans 1–10 (MKNNYTSLKS). Disordered stretches follow at residues 1 to 46 (MKNN…PPYS) and 54 to 73 (LVPEDSSTGPTETANPNVER). A compositionally biased stretch (basic and acidic residues) spans 18 to 37 (LKTGHEIDLEKGPLPEHNSE). The segment covering 58-69 (DSSTGPTETANP) has biased composition (polar residues). 2 consecutive transmembrane segments (helical) span residues 83 to 105 (NIYSLLRLLIAVLAVSVVFFTAW) and 120 to 142 (AFFVLIGLTCLILLITMILEPGL).

The protein belongs to the WTF family.

The protein localises to the endoplasmic reticulum membrane. This is an uncharacterized protein from Schizosaccharomyces pombe (strain 972 / ATCC 24843) (Fission yeast).